Consider the following 376-residue polypeptide: MAYTTFSQNKNDQLKEPMFFGQNVNVARYDQQKYETFEKLIEKQLSFFWRPEEVDVSQDRIDYAALPEHEKHIFISNLKYQTLLDSIQGRSPNVALLPLVSIPELETWIETWTFSETIHSRSYTHIIRNIVNDPSIVFDDIVTNEEIIKRAQDISSYYDDLIRDSQLYGLYGEGTYTVDGKECVVTLRSLKKQLYLCLMSVNALEAIRFYVSFACSFAFAERRLMEGNAKIIKFIARDEALHLTGTQHILNIMAAGQDDPEMAEIAEECKQEAYDLFVAAAEQEKAWADYLFKDGSMIGLNRDILVQYVEYITNIRMQAVGLPLPFQTRSNPIPWINAWLVSDNVQVAPQEVEVSSYLVGQIDSKVDTNDFDDFSL.

Fe cation is bound by residues aspartate 85, glutamate 116, and histidine 119. Tyrosine 123 is a catalytic residue. The Fe cation site is built by glutamate 205, glutamate 239, and histidine 242.

This sequence belongs to the ribonucleoside diphosphate reductase small chain family. In terms of assembly, tetramer of two alpha and two beta subunits. Fe cation is required as a cofactor.

It carries out the reaction a 2'-deoxyribonucleoside 5'-diphosphate + [thioredoxin]-disulfide + H2O = a ribonucleoside 5'-diphosphate + [thioredoxin]-dithiol. In terms of biological role, provides the precursors necessary for DNA synthesis. Catalyzes the biosynthesis of deoxyribonucleotides from the corresponding ribonucleotides. This is Ribonucleoside-diphosphate reductase subunit beta (nrdB) from Haemophilus influenzae (strain ATCC 51907 / DSM 11121 / KW20 / Rd).